A 281-amino-acid polypeptide reads, in one-letter code: Probable endonuclease 4 (281 aa).

The Zn(2+) site is built by H78, H118, E149, D181, H184, H216, D229, H231, and E260.

It belongs to the AP endonuclease 2 family. Zn(2+) serves as cofactor.

The enzyme catalyses Endonucleolytic cleavage to 5'-phosphooligonucleotide end-products.. Functionally, endonuclease IV plays a role in DNA repair. It cleaves phosphodiester bonds at apurinic or apyrimidinic (AP) sites, generating a 3'-hydroxyl group and a 5'-terminal sugar phosphate. This Thermoplasma acidophilum (strain ATCC 25905 / DSM 1728 / JCM 9062 / NBRC 15155 / AMRC-C165) protein is Probable endonuclease 4.